A 262-amino-acid chain; its full sequence is Acyl-coenzyme A diphosphatase FITM2 (262 aa).

The Cytoplasmic segment spans residues 1–23 (MEHLERCAWFLRGTLVRATVRRH). The helical transmembrane segment at 24–44 (LPWALVAAMLAGSVVKELSPL) threads the bilayer. The Lumenal segment spans residues 45–57 (PESYLSNKRNVLN). The chain crosses the membrane as a helical span at residues 58–78 (VYFVKLAWAWTVCLLLPFIAL). The Cytoplasmic segment spans residues 79–93 (TNYHLTGKTSLVLRR). The helical transmembrane segment at 94–114 (LSTLLVGTAIWYICTALFSNI) threads the bilayer. Residues 115–145 (EHYTGSCYQSPALEGIRQEHRSKQQCHREGG) lie on the Lumenal side of the membrane. Residues 146-166 (FWHGFDISGHSFLLTFCALMI) traverse the membrane as a helical segment. H155 is an active-site residue. Topologically, residues 167–190 (VEEMAVLHEVKTDRGHHLHAAITT) are cytoplasmic. The chain crosses the membrane as a helical span at residues 191–211 (LVVALGFLTFIWVWMFLCTAV). The Lumenal segment spans residues 212–218 (YFHDLTQ). H214 is a catalytic residue. A helical membrane pass occupies residues 219–239 (KVFGTMFGLLGWYGTYGYWYL). The Cytoplasmic portion of the chain corresponds to 240–262 (KSFSPGLPPQSCSLTLKRDTYKK).

Belongs to the FIT family. As to expression, widely expressed, with highest levels in white and brown adipose tissues (at protein level). In the heart, mRNA expression levels do not correlate well with protein levels, suggesting post-transcriptional regulation in this organ.

Its subcellular location is the endoplasmic reticulum membrane. It catalyses the reaction an acyl-CoA + H2O = an acyl-4'-phosphopantetheine + adenosine 3',5'-bisphosphate + 2 H(+). The enzyme catalyses (9Z)-octadecenoyl-CoA + H2O = S-(9Z-octadecenoyl)-4'-phosphopantetheine + adenosine 3',5'-bisphosphate + 2 H(+). It carries out the reaction (5Z,8Z,11Z,14Z)-eicosatetraenoyl-CoA + H2O = S-(5Z,8Z,11Z,14Z-eicosatetraenoyl)-4'-phosphopantetheine + adenosine 3',5'-bisphosphate + 2 H(+). The catalysed reaction is hexadecanoyl-CoA + H2O = S-hexadecanoyl-4'-phosphopantetheine + adenosine 3',5'-bisphosphate + 2 H(+). Its function is as follows. Fatty acyl-coenzyme A (CoA) diphosphatase that hydrolyzes fatty acyl-CoA to yield acyl-4'-phosphopantetheine and adenosine 3',5'-bisphosphate. Preferentially hydrolyzes unsaturated long-chain acyl-CoA substrates such as oleoyl-CoA/(9Z)-octadecenoyl-CoA and arachidonoyl-CoA/(5Z,8Z,11Z,14Z)-eicosatetraenoyl-CoA in the endoplasmic reticulum (ER) lumen. This catalytic activity is required for maintaining ER structure and for lipid droplets (LDs) biogenesis, which are lipid storage organelles involved in maintaining lipid and energy homeostasis. Directly binds to diacylglycerol (DAGs) and triacylglycerol, which is also important for LD biogenesis. May support directional budding of nacent LDs from the ER into the cytosol by reducing DAG levels at sites of LD formation. Plays a role in the regulation of cell morphology and cytoskeletal organization. This chain is Acyl-coenzyme A diphosphatase FITM2, found in Mus musculus (Mouse).